Consider the following 499-residue polypeptide: MTSIDLGLKRTLTDVLEDELYNMRLREQETAQEQLDLREAGKVRQVQLQQQQMFSQYADPSVTMMSGDVACEGVLSTAPANLLANPDIRQAPAPQAQAQMLQVNPEVLISYANKNSAHMNVSAVDDKLNRGLVDENSYYDDVDYSSMNAKMADWQLDDNVAMLDNNDARLIFDNEFADDDDLSDDENLFDEGLENYHNELVSSNSPIESLDVAEHKESVDDRLRKYHLDNIQNILSKTSTNDKDILQIKLPSDFTTTNLHSTNPSGLIEDPSQLVLGSSKKITEDTHVEEESKNLPDLTELTSATEIEDILLAVDSDDDDLYTKPIAKQTTKKDNSKPVEKTVVEKTSSVTKAGSNHSRSTLARPTAHARKLSSSRKQAPKVYNPKTTTKSTHTHSKNNATHEAFVCELVNSVTNEVCGAQFSRTYDLTRHQNTIHAKKRSIFRCSECIRALGDEGFQKTFSRLDALTRHIKAKHENLSLEERQQVTKYAKSNIGFVTA.

The disordered stretch occupies residues 329–397; that stretch reads QTTKKDNSKP…TTKSTHTHSK (69 aa). A compositionally biased stretch (basic and acidic residues) spans 331–344; it reads TKKDNSKPVEKTVV. Residues 345 to 363 show a composition bias toward polar residues; the sequence is EKTSSVTKAGSNHSRSTLA. The C2H2-type zinc finger occupies 405–436; the sequence is FVCELVNSVTNEVCGAQFSRTYDLTRHQNTIH.

It is found in the nucleus. Transcription factor that acts as a transcriptional activator of a number of genes encoding proteasomal subunits. Plays a role in ergosterol and plasma membrane homeostasis, and subsequent azole resistance. Regulates the expression of 212 genes, activating 80 genes and repressing, likely in an indirect fashion, 132 genes. Targets comprise several proteasome and ergosterol biosynthesis genes, including ERG1, ERG2, ERG3, and ERG11. Directly regulates ERG11 expression through the 3'-TTGCAAA-5' binding motif. The chain is C2H2-type transcription factor RPN4 from Candida glabrata (strain ATCC 2001 / BCRC 20586 / JCM 3761 / NBRC 0622 / NRRL Y-65 / CBS 138) (Yeast).